The primary structure comprises 92 residues: Putative lambdoid prophage defective integrase (92 aa).

Belongs to the 'phage' integrase family.

The sequence is that of Putative lambdoid prophage defective integrase (intG) from Escherichia coli O157:H7.